Consider the following 273-residue polypeptide: ALMGHMVNAIYQIDEFVNLGANSIETDVSFDDNANPEYTYHGIPCDCGRSCLKWENYNDFLKGLRSATTPGNSKYQSKLILVVFDLKTGSLYDNQASEAGKKLAKNLLKHYWNNGNNGGRAYIVLSIPDLNHYPLIKGFTDTLKQEGHPELLEKVGYDFSGNDAVGDVAKAYKKAGVSGHVWQSDGITNCLLRGPTRVKEAVANRDSGNGYINKVYYWTVDKRATTRDALDAGVDGVMTNYPDVIADVMNEAAYKNKVRLATYEDSPWVTFKK.

Residue His-5 is part of the active site. Mg(2+)-binding residues include Glu-25 and Asp-27. Residue His-41 is the Nucleophile of the active site. Intrachain disulfides connect Cys-45/Cys-51 and Cys-47/Cys-190. Mg(2+) is bound at residue Asp-85.

The protein belongs to the arthropod phospholipase D family. Class II subfamily. The cofactor is Mg(2+). In terms of tissue distribution, expressed by the venom gland.

It is found in the secreted. The catalysed reaction is an N-(acyl)-sphingosylphosphocholine = an N-(acyl)-sphingosyl-1,3-cyclic phosphate + choline. It carries out the reaction an N-(acyl)-sphingosylphosphoethanolamine = an N-(acyl)-sphingosyl-1,3-cyclic phosphate + ethanolamine. It catalyses the reaction a 1-acyl-sn-glycero-3-phosphocholine = a 1-acyl-sn-glycero-2,3-cyclic phosphate + choline. The enzyme catalyses a 1-acyl-sn-glycero-3-phosphoethanolamine = a 1-acyl-sn-glycero-2,3-cyclic phosphate + ethanolamine. Its function is as follows. Dermonecrotic toxins cleave the phosphodiester linkage between the phosphate and headgroup of certain phospholipids (sphingolipid and lysolipid substrates), forming an alcohol (often choline) and a cyclic phosphate. This toxin acts on sphingomyelin (SM). It may also act on ceramide phosphoethanolamine (CPE), lysophosphatidylcholine (LPC) and lysophosphatidylethanolamine (LPE), but not on lysophosphatidylserine (LPS), and lysophosphatidylglycerol (LPG). It acts by transphosphatidylation, releasing exclusively cyclic phosphate products as second products. Induces dermonecrosis, hemolysis, increased vascular permeability, edema, inflammatory response, and platelet aggregation. The protein is Dermonecrotic toxin LhSicTox-alphaIA2aii of Loxosceles hirsuta (Recluse spider).